Reading from the N-terminus, the 299-residue chain is Troponin T, cardiac muscle (299 aa).

Residues 1–71 (MSDAEEEVVE…EARDAEDGPV (71 aa)) are compositionally biased toward acidic residues. 2 disordered regions span residues 1–97 (MSDA…GERV) and 137–220 (DRIE…EKKK). N-acetylserine is present on serine 2. A Phosphoserine modification is found at serine 2. Composition is skewed to basic and acidic residues over residues 137 to 185 (DRIE…DEAR) and 204 to 220 (QTER…EKKK). At threonine 205 the chain carries Phosphothreonine; by PKC/PRKCA. Phosphoserine; by PKC/PRKCA is present on serine 209. Threonine 214 carries the post-translational modification Phosphothreonine; by PKC/PRKCA and RAF1. Threonine 295 bears the Phosphothreonine; by PKC/PRKCA mark.

The protein belongs to the troponin T family. Post-translationally, phosphorylation at Thr-214 by PRKCA induces significant reduction in myofilament calcium sensitivity and actomyosin ATPase activity.

Its function is as follows. Troponin T is the tropomyosin-binding subunit of troponin, the thin filament regulatory complex which confers calcium-sensitivity to striated muscle actomyosin ATPase activity. The chain is Troponin T, cardiac muscle (Tnnt2) from Rattus norvegicus (Rat).